Here is a 284-residue protein sequence, read N- to C-terminus: 3-methyl-2-oxobutanoate hydroxymethyltransferase (284 aa).

Mg(2+) is bound by residues Asp-52 and Asp-91. 3-methyl-2-oxobutanoate is bound by residues 52–53 (DS), Asp-91, and Lys-121. Residue Glu-123 coordinates Mg(2+). Residue Glu-191 is the Proton acceptor of the active site.

Belongs to the PanB family. Homodecamer; pentamer of dimers. Mg(2+) serves as cofactor.

Its subcellular location is the cytoplasm. It carries out the reaction 3-methyl-2-oxobutanoate + (6R)-5,10-methylene-5,6,7,8-tetrahydrofolate + H2O = 2-dehydropantoate + (6S)-5,6,7,8-tetrahydrofolate. Its pathway is cofactor biosynthesis; (R)-pantothenate biosynthesis; (R)-pantoate from 3-methyl-2-oxobutanoate: step 1/2. Functionally, catalyzes the reversible reaction in which hydroxymethyl group from 5,10-methylenetetrahydrofolate is transferred onto alpha-ketoisovalerate to form ketopantoate. This Deinococcus radiodurans (strain ATCC 13939 / DSM 20539 / JCM 16871 / CCUG 27074 / LMG 4051 / NBRC 15346 / NCIMB 9279 / VKM B-1422 / R1) protein is 3-methyl-2-oxobutanoate hydroxymethyltransferase.